Reading from the N-terminus, the 472-residue chain is Glutamate synthase [NADPH] small chain (472 aa).

The 4Fe-4S ferredoxin-type domain maps to 38-69; it reads GQAKAQADRCLSCGNPYCEWKCPVHNYIPNWL. [4Fe-4S] cluster contacts are provided by cysteine 47, cysteine 50, cysteine 55, and cysteine 59.

As to quaternary structure, aggregate of 4 catalytic active heterodimers, consisting of a large and a small subunit. It depends on [4Fe-4S] cluster as a cofactor.

It catalyses the reaction 2 L-glutamate + NADP(+) = L-glutamine + 2-oxoglutarate + NADPH + H(+). It functions in the pathway amino-acid biosynthesis; L-glutamate biosynthesis via GLT pathway; L-glutamate from 2-oxoglutarate and L-glutamine (NADP(+) route): step 1/1. Its pathway is energy metabolism; nitrogen metabolism. Catalyzes the conversion of L-glutamine and 2-oxoglutarate into two molecules of L-glutamate. The sequence is that of Glutamate synthase [NADPH] small chain (gltD) from Escherichia coli (strain K12).